Consider the following 178-residue polypeptide: UPF0098 protein PYRAB11530 (178 aa).

Residues 1–22 (MRYLVPLLVFMVLGMGCLGGGG) form the signal peptide.

It belongs to the UPF0098 family.

This is UPF0098 protein PYRAB11530 from Pyrococcus abyssi (strain GE5 / Orsay).